A 601-amino-acid polypeptide reads, in one-letter code: Glutathione-regulated potassium-efflux system protein KefB (601 aa).

The next 13 helical transmembrane spans lie at 4–24, 29–49, 55–75, 87–107, 111–131, 152–172, 177–197, 207–227, 230–250, 262–282, 284–304, 324–344, and 356–376; these read ADLL…VPLA, IGAV…GLGF, EILH…GLEL, IFGV…GLLM, FLWQ…TAMA, VLLF…LLAG, HFDW…LIGG, FIAA…LVLS, LFMD…GVLL, AIDP…GMSL, LGVL…LVVI, MQFA…FSTA, and ALLL…MKGI. In terms of domain architecture, RCK N-terminal spans 400-519; that stretch reads KPQVIVVGFG…AGVTQFSRET (120 aa).

This sequence belongs to the monovalent cation:proton antiporter 2 (CPA2) transporter (TC 2.A.37) family. KefB subfamily. In terms of assembly, interacts with the regulatory subunit KefG.

The protein resides in the cell inner membrane. In terms of biological role, pore-forming subunit of a potassium efflux system that confers protection against electrophiles. Catalyzes K(+)/H(+) antiport. In Salmonella paratyphi C (strain RKS4594), this protein is Glutathione-regulated potassium-efflux system protein KefB.